We begin with the raw amino-acid sequence, 620 residues long: Coenzyme F420-dependent sulfite reductase (620 aa).

Residues 6–35 enclose the 4Fe-4S ferredoxin-type 1 domain; that stretch reads LNEIVDSGVCARCGTCTIVCPNGILTFDER. C15, C18, C21, C25, C428, C434, C468, C472, C495, C498, C501, C505, C524, C527, C530, and C534 together coordinate [4Fe-4S] cluster. C472 lines the siroheme pocket. 2 consecutive 4Fe-4S ferredoxin-type domains span residues 486–515 and 520–544; these read KYPKVNEEKCNGCGRCAEVCKVEAIDIRGE and NYNVCVGCGKCIKNCPNEAREVKEE.

The protein belongs to the nitrite and sulfite reductase 4Fe-4S domain family. [4Fe-4S] cluster serves as cofactor. Siroheme is required as a cofactor.

The catalysed reaction is 3 oxidized coenzyme F420-(gamma-L-Glu)(n) + hydrogen sulfide + 3 H2O + 2 H(+) = 3 reduced coenzyme F420-(gamma-L-Glu)(n) + sulfite. Its function is as follows. Catalyzes the reduction of sulfite to sulfide using reduced F420 as the electron source. Involved in sulfite detoxification and assimilation. Cannot use NADH or NADPH. The sequence is that of Coenzyme F420-dependent sulfite reductase from Methanocaldococcus jannaschii (strain ATCC 43067 / DSM 2661 / JAL-1 / JCM 10045 / NBRC 100440) (Methanococcus jannaschii).